The following is a 336-amino-acid chain: Cell division protein ZipA (336 aa).

The Periplasmic portion of the chain corresponds to 1–2 (ME). A helical transmembrane segment spans residues 3–23 (LHILFFILAGLLIAVLIGFSL). Residues 24–336 (WSARREKSRI…SRQAYLARVS (313 aa)) are Cytoplasmic-facing.

It belongs to the ZipA family. In terms of assembly, interacts with FtsZ via their C-terminal domains.

It is found in the cell inner membrane. Functionally, essential cell division protein that stabilizes the FtsZ protofilaments by cross-linking them and that serves as a cytoplasmic membrane anchor for the Z ring. Also required for the recruitment to the septal ring of downstream cell division proteins. The chain is Cell division protein ZipA from Actinobacillus pleuropneumoniae serotype 5b (strain L20).